The primary structure comprises 115 residues: T cell receptor beta variable 11-1 (115 aa).

Residues 1–21 form the signal peptide; it reads MSTRLLCWMALCLLGAELSEA. The Ig-like domain maps to 22-115; it reads EVAQSPRYKI…SAMYLCASSL (94 aa). Cysteines 42 and 111 form a disulfide.

Alpha-beta TR is a heterodimer composed of an alpha and beta chain; disulfide-linked. The alpha-beta TR is associated with the transmembrane signaling CD3 coreceptor proteins to form the TR-CD3 (TcR or TCR). The assembly of alpha-beta TR heterodimers with CD3 occurs in the endoplasmic reticulum where a single alpha-beta TR heterodimer associates with one CD3D-CD3E heterodimer, one CD3G-CD3E heterodimer and one CD247 homodimer forming a stable octameric structure. CD3D-CD3E and CD3G-CD3E heterodimers preferentially associate with TR alpha and TR beta chains, respectively. The association of the CD247 homodimer is the last step of TcR assembly in the endoplasmic reticulum and is required for transport to the cell surface.

It is found in the cell membrane. V region of the variable domain of T cell receptor (TR) beta chain that participates in the antigen recognition. Alpha-beta T cell receptors are antigen specific receptors which are essential to the immune response and are present on the cell surface of T lymphocytes. Recognize peptide-major histocompatibility (MH) (pMH) complexes that are displayed by antigen presenting cells (APC), a prerequisite for efficient T cell adaptive immunity against pathogens. Binding of alpha-beta TR to pMH complex initiates TR-CD3 clustering on the cell surface and intracellular activation of LCK that phosphorylates the ITAM motifs of CD3G, CD3D, CD3E and CD247 enabling the recruitment of ZAP70. In turn ZAP70 phosphorylates LAT, which recruits numerous signaling molecules to form the LAT signalosome. The LAT signalosome propagates signal branching to three major signaling pathways, the calcium, the mitogen-activated protein kinase (MAPK) kinase and the nuclear factor NF-kappa-B (NF-kB) pathways, leading to the mobilization of transcription factors that are critical for gene expression and essential for T cell growth and differentiation. The T cell repertoire is generated in the thymus, by V-(D)-J rearrangement. This repertoire is then shaped by intrathymic selection events to generate a peripheral T cell pool of self-MH restricted, non-autoaggressive T cells. Post-thymic interaction of alpha-beta TR with the pMH complexes shapes TR structural and functional avidity. In Homo sapiens (Human), this protein is T cell receptor beta variable 11-1.